Consider the following 328-residue polypeptide: Tryptophan--tRNA ligase (328 aa).

ATP is bound by residues 8–10 (RPT) and 16–17 (GH). The short motif at 9–17 (PTGKLHIGH) is the 'HIGH' region element. D136 provides a ligand contact to L-tryptophan. ATP is bound by residues 148–150 (GED), L186, and 193–197 (KMSKS). Positions 193-197 (KMSKS) match the 'KMSKS' region motif.

It belongs to the class-I aminoacyl-tRNA synthetase family. Homodimer.

Its subcellular location is the cytoplasm. It catalyses the reaction tRNA(Trp) + L-tryptophan + ATP = L-tryptophyl-tRNA(Trp) + AMP + diphosphate + H(+). Catalyzes the attachment of tryptophan to tRNA(Trp). This is Tryptophan--tRNA ligase from Thermotoga maritima (strain ATCC 43589 / DSM 3109 / JCM 10099 / NBRC 100826 / MSB8).